Here is an 82-residue protein sequence, read N- to C-terminus: 4-(gamma-L-glutamylamino)butanoyl-[BtrI acyl-carrier protein] monooxygenase BtrO (82 aa).

Homotetramer.

It catalyses the reaction 4-(gamma-L-glutamylamino)butanoyl-[BtrI ACP] + FMNH2 + O2 = 4-(gamma-L-glutamylamino)-(2S)-2-hydroxybutanoyl-[BtrI ACP] + FMN + H2O + H(+). It participates in antibiotic biosynthesis; butirosin biosynthesis. Functionally, NAD(P)H:FMN oxidoreductase component of a two-component system involved in the biosynthesis of the side chain of the aminoglycoside antibiotics in the biosynthetic pathway of butirosin. Together with BtrO, mediates hydroxylation of gamma-L-Glu-GABA-S-BtrI. In Niallia circulans (Bacillus circulans), this protein is 4-(gamma-L-glutamylamino)butanoyl-[BtrI acyl-carrier protein] monooxygenase BtrO (btrV).